We begin with the raw amino-acid sequence, 92 residues long: C-C motif chemokine 4 (92 aa).

Positions 1-23 (MKLCVTVLSLLVLAAAFCSPALS) are cleaved as a signal peptide. Cystine bridges form between C34-C58 and C35-C74.

Belongs to the intercrine beta (chemokine CC) family. Homodimer. Interacts with CCR5. In terms of tissue distribution, detected in peripheral blood mononuclear cells and lymph nodes.

It localises to the secreted. In terms of biological role, monokine with inflammatory and chemokinetic properties. This chain is C-C motif chemokine 4 (CCL4), found in Macaca mulatta (Rhesus macaque).